Consider the following 459-residue polypeptide: Cysteine--tRNA ligase (459 aa).

C28 contacts Zn(2+). The 'HIGH' region signature appears at 30-40 (VTVYDLCHFGH). Zn(2+) is bound by residues C209, H234, and E238. The short motif at 266–270 (KMSKS) is the 'KMSKS' region element. K269 contributes to the ATP binding site.

This sequence belongs to the class-I aminoacyl-tRNA synthetase family. In terms of assembly, monomer. It depends on Zn(2+) as a cofactor.

It is found in the cytoplasm. The catalysed reaction is tRNA(Cys) + L-cysteine + ATP = L-cysteinyl-tRNA(Cys) + AMP + diphosphate. The sequence is that of Cysteine--tRNA ligase from Actinobacillus pleuropneumoniae serotype 5b (strain L20).